The sequence spans 412 residues: D-xylonate dehydratase (412 aa).

As to quaternary structure, homooctamer.

The enzyme catalyses D-xylonate = 2-dehydro-3-deoxy-D-arabinonate + H2O. Its function is as follows. NADP-dependent D-xylose dehydrogenase involved in the degradation of D-xylose, a major component of hemicelluloses such as xylan. Catalyzes the third reaction in the xylose utilization pathway through dehydratation of D-xylonate into 2-dehydro-3-deoxy-D-xylonate. The chain is D-xylonate dehydratase from Haloferax volcanii (strain ATCC 29605 / DSM 3757 / JCM 8879 / NBRC 14742 / NCIMB 2012 / VKM B-1768 / DS2) (Halobacterium volcanii).